The primary structure comprises 612 residues: UPF0329 protein ECU05_1680/ECU11_0050 (612 aa).

Basic and acidic residues predominate over residues 304–330; that stretch reads RQRREMEKKEEEKKKEEEKKKEEEKRK. The interval 304–424 is disordered; sequence RQRREMEKKE…RKRYKIHRRV (121 aa). A compositionally biased stretch (basic residues) spans 331–349; sequence EEKKKKKEEKKEEKKKKKE. A compositionally biased stretch (basic and acidic residues) spans 350 to 388; sequence EKKEEKKEEKKEEKKEEKKEEKKEEKKEEKSGKSLREGE.

This sequence belongs to the UPF0329 family.

The chain is UPF0329 protein ECU05_1680/ECU11_0050 from Encephalitozoon cuniculi (strain GB-M1) (Microsporidian parasite).